We begin with the raw amino-acid sequence, 524 residues long: Bifunctional purine biosynthesis protein PurH (524 aa).

The MGS-like domain maps to Met1–Val145.

This sequence belongs to the PurH family.

The enzyme catalyses (6R)-10-formyltetrahydrofolate + 5-amino-1-(5-phospho-beta-D-ribosyl)imidazole-4-carboxamide = 5-formamido-1-(5-phospho-D-ribosyl)imidazole-4-carboxamide + (6S)-5,6,7,8-tetrahydrofolate. It carries out the reaction IMP + H2O = 5-formamido-1-(5-phospho-D-ribosyl)imidazole-4-carboxamide. It functions in the pathway purine metabolism; IMP biosynthesis via de novo pathway; 5-formamido-1-(5-phospho-D-ribosyl)imidazole-4-carboxamide from 5-amino-1-(5-phospho-D-ribosyl)imidazole-4-carboxamide (10-formyl THF route): step 1/1. Its pathway is purine metabolism; IMP biosynthesis via de novo pathway; IMP from 5-formamido-1-(5-phospho-D-ribosyl)imidazole-4-carboxamide: step 1/1. The protein is Bifunctional purine biosynthesis protein PurH of Cupriavidus metallidurans (strain ATCC 43123 / DSM 2839 / NBRC 102507 / CH34) (Ralstonia metallidurans).